The primary structure comprises 242 residues: ATP synthase subunit a (242 aa).

Helical transmembrane passes span 29–49, 84–104, 114–134, 140–160, 181–201, and 203–223; these read SSIYMLLASILALTYFYLAFY, FIPLVFSLFIFILFCNLLGMT, IIVTFTLAILVFLMVTIVGFV, FLTLFLPHGTPLWLAPLMIVI, MAGHVLLKVIAGFTVSLMIYL, and FLPIPIMVILIGFEIFVAILQ.

This sequence belongs to the ATPase A chain family. As to quaternary structure, F-type ATPases have 2 components, CF(1) - the catalytic core - and CF(0) - the membrane proton channel. CF(1) has five subunits: alpha(3), beta(3), gamma(1), delta(1), epsilon(1). CF(0) has three main subunits: a(1), b(2) and c(9-12). The alpha and beta chains form an alternating ring which encloses part of the gamma chain. CF(1) is attached to CF(0) by a central stalk formed by the gamma and epsilon chains, while a peripheral stalk is formed by the delta and b chains.

Its subcellular location is the cell inner membrane. Its function is as follows. Key component of the proton channel; it plays a direct role in the translocation of protons across the membrane. In Rickettsia conorii (strain ATCC VR-613 / Malish 7), this protein is ATP synthase subunit a.